Reading from the N-terminus, the 560-residue chain is 2-isopropylmalate synthase (560 aa).

In terms of domain architecture, Pyruvate carboxyltransferase spans Pro-30–Glu-303. The Mg(2+) site is built by Asp-39, His-242, His-244, and Asn-278. Residues Gln-437–Ala-560 are regulatory domain.

Belongs to the alpha-IPM synthase/homocitrate synthase family. LeuA type 2 subfamily. As to quaternary structure, homodimer. Requires Mg(2+) as cofactor.

The protein localises to the cytoplasm. It carries out the reaction 3-methyl-2-oxobutanoate + acetyl-CoA + H2O = (2S)-2-isopropylmalate + CoA + H(+). The protein operates within amino-acid biosynthesis; L-leucine biosynthesis; L-leucine from 3-methyl-2-oxobutanoate: step 1/4. In terms of biological role, catalyzes the condensation of the acetyl group of acetyl-CoA with 3-methyl-2-oxobutanoate (2-ketoisovalerate) to form 3-carboxy-3-hydroxy-4-methylpentanoate (2-isopropylmalate). The polypeptide is 2-isopropylmalate synthase (Rhizobium johnstonii (strain DSM 114642 / LMG 32736 / 3841) (Rhizobium leguminosarum bv. viciae)).